The chain runs to 610 residues: E-selectin (610 aa).

The first 21 residues, 1 to 21 (MIASQFLSALTLVLLIKESGA), serve as a signal peptide directing secretion. The C-type lectin domain occupies 22–139 (WSYNTSTEAM…CSKKKLALCY (118 aa)). Over 22 to 556 (WSYNTSTEAM…CEAPTESNIP (535 aa)) the chain is Extracellular. N-linked (GlcNAc...) asparagine glycosylation occurs at asparagine 25. 5 cysteine pairs are disulfide-bonded: cysteine 40/cysteine 138, cysteine 111/cysteine 130, cysteine 143/cysteine 154, cysteine 148/cysteine 163, and cysteine 165/cysteine 174. Glutamate 101, asparagine 103, and glutamate 109 together coordinate Ca(2+). Residues 101-109 (EPNNRQKDE), 113-118 (EIYIKR), and 126-128 (NDE) each bind a carbohydrate. 2 residues coordinate Ca(2+): asparagine 126 and aspartate 127. Residues 140–175 (TAACTNTSCSGHGECVETINNYTCKCDPGFSGLKCE) form the EGF-like domain. N-linked (GlcNAc...) asparagine glycans are attached at residues asparagine 145 and asparagine 160. Sushi domains follow at residues 178–239 (VNCT…ACNV), 240–301 (VECD…TCKA), 303–364 (TCRA…VCEA), 366–427 (QCTA…TCEA), 429–490 (RCDA…SCQV), and 491–549 (VKCS…TCEA). 3 N-linked (GlcNAc...) asparagine glycosylation sites follow: asparagine 179, asparagine 199, and asparagine 203. Cystine bridges form between cysteine 180–cysteine 224, cysteine 193–cysteine 206, cysteine 210–cysteine 237, cysteine 242–cysteine 286, cysteine 255–cysteine 268, cysteine 272–cysteine 299, cysteine 304–cysteine 349, cysteine 335–cysteine 362, cysteine 367–cysteine 412, cysteine 398–cysteine 425, cysteine 430–cysteine 475, cysteine 461–cysteine 488, cysteine 493–cysteine 534, and cysteine 520–cysteine 547. A glycan (N-linked (GlcNAc...) asparagine) is linked at asparagine 265. 2 N-linked (GlcNAc...) asparagine glycosylation sites follow: asparagine 312 and asparagine 332. 2 N-linked (GlcNAc...) asparagine glycosylation sites follow: asparagine 503 and asparagine 527. Residues 557–578 (LVAGLSAAGLSLLTLAPFLLWL) form a helical membrane-spanning segment. The Cytoplasmic portion of the chain corresponds to 579–610 (RKCLRKAKKFVPASSCQSLESDGSYQKPSYIL).

The protein belongs to the selectin/LECAM family. Interacts with SELPLG/PSGL1 and PODXL2 through the sialyl Lewis X epitope. SELPLG sulfation appears not to be required for this interaction.

It localises to the cell membrane. Cell-surface glycoprotein having a role in immunoadhesion. Mediates in the adhesion of blood neutrophils in cytokine-activated endothelium through interaction with SELPLG/PSGL1. May have a role in capillary morphogenesis. This Homo sapiens (Human) protein is E-selectin (SELE).